A 387-amino-acid chain; its full sequence is MPATPDALSIARDLLRCPSVTPADAGALDVLDRLLRGAGFEVHRVTFSEPGAADIDNLYARIGTGAPHLMFAGHTDVVPPGDVSAWSHGAFAGEVADGQLYGRGAVDMKGGIACAVAAVLVYLAACGGQPKGSISFLITGDEEDIAVNGTVKLLQWADARGENFDHCIVGEPSNVEELGDCIKIGRRGSLSGTLIVDGVQGHVAYPQRAVNPVPDIATLIVALSHEPLDHGTAQFQPSNLEFTSVDVGNAATNVIPAQARAKFNIRFNDQHSIKSLQALIEHHLAAACGNRIRARIEWLPSNAGAFVTKPGPFTDLVTAAIEQVTGRRPELNTGGGTSDARFITHYCPVIEFGLVGQTMHKVDERTPVSDLEKLTAIYRGVLERYFA.

A Zn(2+)-binding site is contributed by His74. The active site involves Asp76. Residue Asp107 coordinates Zn(2+). The Proton acceptor role is filled by Glu142. 3 residues coordinate Zn(2+): Glu143, Glu171, and His360.

Belongs to the peptidase M20A family. DapE subfamily. As to quaternary structure, homodimer. It depends on Zn(2+) as a cofactor. Co(2+) is required as a cofactor.

It carries out the reaction N-succinyl-(2S,6S)-2,6-diaminopimelate + H2O = (2S,6S)-2,6-diaminopimelate + succinate. The protein operates within amino-acid biosynthesis; L-lysine biosynthesis via DAP pathway; LL-2,6-diaminopimelate from (S)-tetrahydrodipicolinate (succinylase route): step 3/3. Its function is as follows. Catalyzes the hydrolysis of N-succinyl-L,L-diaminopimelic acid (SDAP), forming succinate and LL-2,6-diaminopimelate (DAP), an intermediate involved in the bacterial biosynthesis of lysine and meso-diaminopimelic acid, an essential component of bacterial cell walls. This Rhodopseudomonas palustris (strain BisA53) protein is Succinyl-diaminopimelate desuccinylase.